The chain runs to 176 residues: Large ribosomal subunit protein uL30 (176 aa).

This sequence belongs to the universal ribosomal protein uL30 family. As to quaternary structure, part of the 50S ribosomal subunit.

The protein is Large ribosomal subunit protein uL30 of Pyrobaculum arsenaticum (strain DSM 13514 / JCM 11321 / PZ6).